Consider the following 85-residue polypeptide: Small ribosomal subunit protein bS16 (85 aa).

The protein belongs to the bacterial ribosomal protein bS16 family.

The protein is Small ribosomal subunit protein bS16 of Xanthomonas oryzae pv. oryzae (strain PXO99A).